The sequence spans 132 residues: Small ribosomal subunit protein uS8 (132 aa).

Belongs to the universal ribosomal protein uS8 family. In terms of assembly, part of the 30S ribosomal subunit. Contacts proteins S5 and S12.

Functionally, one of the primary rRNA binding proteins, it binds directly to 16S rRNA central domain where it helps coordinate assembly of the platform of the 30S subunit. The polypeptide is Small ribosomal subunit protein uS8 (Thermoanaerobacter pseudethanolicus (strain ATCC 33223 / 39E) (Clostridium thermohydrosulfuricum)).